The sequence spans 153 residues: Large ribosomal subunit protein uL30 (153 aa).

It belongs to the universal ribosomal protein uL30 family. Part of the 50S ribosomal subunit.

The sequence is that of Large ribosomal subunit protein uL30 from Methanosarcina barkeri (strain Fusaro / DSM 804).